The sequence spans 496 residues: Fibronectin type III and SPRY domain-containing protein 1 (496 aa).

Positions 4-99 form a coiled coil; it reads QREALRKIIT…ALESSEELLE (96 aa). Residues 105–162 form the COS domain; it reads LQASDSEDFSQAAKEIKDGITMAPAFRLSLKAKVSDNMSHLMVDFAQERQMLQALKFL. Residues 164–268 enclose the Fibronectin type-III domain; it reads VPSAPTIDLA…EPVTLETPAF (105 aa). The region spanning 290 to 477 is the B30.2/SPRY domain; that stretch reads WDAMGGKVQD…VTTGLQVPSA (188 aa). A disordered region spans residues 301 to 336; sequence KAREKEGKGRTASPVNSPARGTPSPKRMSSGRGGRD. Arg-310 and Arg-320 each carry omega-N-methylarginine.

As to quaternary structure, oligomerization is required for binding to microtubules.

The protein localises to the cytoplasm. It localises to the cytoskeleton. It is found in the microtubule organizing center. The protein resides in the centrosome. Its subcellular location is the nucleus. The protein localises to the cleavage furrow. Its function is as follows. May be involved in microtubule organization and stabilization. The sequence is that of Fibronectin type III and SPRY domain-containing protein 1 (Fsd1) from Mus musculus (Mouse).